Here is a 170-residue protein sequence, read N- to C-terminus: Translationally-controlled tumor protein homolog (170 aa).

The region spanning methionine 1–cysteine 170 is the TCTP domain.

Belongs to the TCTP family.

It localises to the cytoplasm. In terms of biological role, involved in calcium binding and microtubule stabilization. The protein is Translationally-controlled tumor protein homolog (tpt1) of Scophthalmus maximus (Turbot).